Here is a 177-residue protein sequence, read N- to C-terminus: MSRVAKNPVAIPAKVEVVLSSDNIAVSGPLGKLSLPLSGDVAIERDGDNLTFAAASESQHARAMSGTLRSLVFNMVTGVSQGFTRKLTLLGVGYKAQAQGANLNLDLGFSHPVSHKMPDGVTVQTPSPTEIVLTGADKQVVGQVAAQIRAYRAPEPYKGKGVRYADEVVIIKETKKK.

Belongs to the universal ribosomal protein uL6 family. In terms of assembly, part of the 50S ribosomal subunit.

In terms of biological role, this protein binds to the 23S rRNA, and is important in its secondary structure. It is located near the subunit interface in the base of the L7/L12 stalk, and near the tRNA binding site of the peptidyltransferase center. The polypeptide is Large ribosomal subunit protein uL6 (Methylobacillus flagellatus (strain ATCC 51484 / DSM 6875 / VKM B-1610 / KT)).